The primary structure comprises 339 residues: Intelectin-1 (339 aa).

The N-terminal stretch at 1 to 18 (MLSYSLLLLALAFPAGHA) is a signal peptide. Residues 58–108 (GDMNYGYRSCNEIKSSDSRAPDGIYTLATEDGESYQTFCDMTTNGGGWTLV) enclose the Fibrinogen C-terminal domain. Cysteines 67 and 96 form a disulfide. Ca(2+) contacts are provided by His112, Glu113, Asn115, Gly118, Gly123, Asp124, and Asp159. Intrachain disulfides connect Cys120-Cys306, Cys225-Cys285, and Cys277-Cys291. N-linked (GlcNAc...) asparagine glycosylation occurs at Asn189. Residues Asn286, Glu288, Glu300, and Asp308 each contribute to the Ca(2+) site. Residues 288 to 289 (EH) and Glu300 each bind a carbohydrate.

Homotrimer; disulfide-linked. Homohexamer; disulfide-linked. Forms primarily homotrimers in solution, but can also form homohexamers. Post-translationally, N-glycosylated.

It is found in the secreted. The protein resides in the cytoplasmic vesicle. The protein localises to the secretory vesicle. Its function is as follows. Lectin that specifically recognizes microbial carbohydrate chains in a calcium-dependent manner. Binds to microbial glycans that contain a terminal acyclic 1,2-diol moiety, including beta-linked D-galactofuranose (beta-Galf) and D-phosphoglycerol-modified glycans. Binds to S.pneumoniae serotypes with glycans that contain beta-linked D-galactofuranose (beta-Galf) and with D-phosphoglycerol-modified glycans. Can bind a variety of monosaccharides (in vitro). Probably plays a role in the defense system against microorganisms. This Xenopus laevis (African clawed frog) protein is Intelectin-1 (itln1).